Consider the following 651-residue polypeptide: Nucleolin (651 aa).

Residues 1–11 (MVKLAKGAKTQ) are compositionally biased toward low complexity. The disordered stretch occupies residues 1–230 (MVKLAKGAKT…AKKTKTDTAS (230 aa)). Positions 26-45 (EDSEEEEDMEEDDSSDEEVE) are enriched in acidic residues. Residues 54–79 (KKTATPAKATPGKAATPGKKGATPAK) show a composition bias toward low complexity. Positions 89–101 (SEEEEDDSDEEAE) are enriched in acidic residues. Residues 106-116 (IKNKPVAKKAV) are compositionally biased toward basic residues. Acidic residues-rich tracts occupy residues 122 to 134 (SEEDDDDEDESEE), 155 to 168 (SEEEDDEESEDEPM), and 183 to 204 (AEEDDEEEDDDDEEDDDDEEEQ). Position 155 is a phosphoserine (serine 155). The segment covering 219–228 (PEAKKTKTDT) has biased composition (basic and acidic residues). RRM domains are found at residues 233 to 309 (LSIF…KAMA), 325 to 399 (RTLF…FTGE), 415 to 488 (KVLV…FSQG), and 503 to 578 (KTLF…FAKP). A disordered region spans residues 574–651 (DFAKPKGDSQ…GQGKKMRFDD (78 aa)). Positions 585–644 (GGRGGFGRGGGFRGGRGGRGGGGGRGFGGRGGGRGRGGFGGRGGGGFRGGQGGGFRGGQG) are enriched in gly residues.

It is found in the nucleus. It localises to the nucleolus. Nucleolin is the major nucleolar protein of growing eukaryotic cells. It is found associated with intranucleolar chromatin and pre-ribosomal particles. It induces chromatin decondensation by binding to histone H1. It is thought to play a role in pre-rRNA transcription and ribosome assembly. The chain is Nucleolin (ncl) from Xenopus laevis (African clawed frog).